Here is a 1331-residue protein sequence, read N- to C-terminus: Mitogen-activated protein kinase kinase kinase 15 (1331 aa).

Positions 1 to 13 (MEGGGGSGGGGGP) are enriched in gly residues. Residues 1–61 (MEGGGGSGGG…GEAEGGRGPR (61 aa)) form a disordered region. Residues 656–912 (NGERVVLGKG…AADLLQEGFL (257 aa)) form the Protein kinase domain. Residues 662-670 (LGKGSYGIV) and Lys685 contribute to the ATP site. Asp777 functions as the Proton acceptor in the catalytic mechanism. Disordered regions lie at residues 934–964 (GTGTLALPSSGELVGSSSSEHGSISPDSDAQ) and 983–1005 (LSVPDESPALDDRSTALPPEERD). Over residues 940–962 (LPSSGELVGSSSSEHGSISPDSD) the composition is skewed to low complexity. Over residues 992–1005 (LDDRSTALPPEERD) the composition is skewed to basic and acidic residues. Residues 1216–1236 (LVQKEREYQNLLRLILDQKTQ) are a coiled coil.

The protein belongs to the protein kinase superfamily. STE Ser/Thr protein kinase family. MAP kinase kinase kinase subfamily. Mg(2+) serves as cofactor.

The enzyme catalyses L-seryl-[protein] + ATP = O-phospho-L-seryl-[protein] + ADP + H(+). It catalyses the reaction L-threonyl-[protein] + ATP = O-phospho-L-threonyl-[protein] + ADP + H(+). With respect to regulation, contains an N-terminal autoinhibitory domain. Activated by phosphorylation at Thr-816, inhibited by phosphorylation at Ser-928. Its function is as follows. Serine/threonine kinase which acts as a component of the MAP kinase signal transduction pathway. Once activated, acts as an upstream activator of the p38 MAPK signal transduction cascade through the phosphorylation and activation of several MAP kinase kinases. May function in a signal transduction pathway that is activated by various cell stresses and leads to apoptosis. Involved in phosphorylation of WNK4 in response to osmotic stress or hypotonic low-chloride stimulation via the p38 MAPK signal transduction cascade. The protein is Mitogen-activated protein kinase kinase kinase 15 of Mus musculus (Mouse).